A 180-amino-acid chain; its full sequence is Negative modulator of initiation of replication (180 aa).

Interaction with DNA stretches follow at residues A86–V87, R115–Y119, and N149–K155.

The protein belongs to the SeqA family. Homodimer. Polymerizes to form helical filaments.

It is found in the cytoplasm. Its function is as follows. Negative regulator of replication initiation, which contributes to regulation of DNA replication and ensures that replication initiation occurs exactly once per chromosome per cell cycle. Binds to pairs of hemimethylated GATC sequences in the oriC region, thus preventing assembly of replication proteins and re-initiation at newly replicated origins. Repression is relieved when the region becomes fully methylated. This chain is Negative modulator of initiation of replication, found in Enterobacter sp. (strain 638).